A 335-amino-acid chain; its full sequence is MKTYYEKDANVELLKGKTVAVIGYGSQGHAQAQNLRDSGVEVVVGVRPGKSFEVAKTDGFEVMSVSEAVRTAQVVQMLLPDEQQAHVYKAGVEENLREGQMLLFSHGFNIHFGQINPPSYVDVAMVAPKSPGHLVRRVFQEGNGVPALVAVHQDATGTALHVALAYAKGVGCTRAGVIETTFQEETETDLFGEQTVLCGGVTALVKAGFETLTEGGYRPEIAYFECLHELKLIVDLMYEGGLTNMRHSISDTAEFGDYVTGSRIVTDETKKEMKRVLTEIQQGEFAKKWILENQAGRPTYNAMKKAEQNHQLEKVGAELREMMSWIDAPKELVKK.

The KARI N-terminal Rossmann domain maps to 1-180 (MKTYYEKDAN…GCTRAGVIET (180 aa)). NADP(+) contacts are provided by residues 24–27 (YGSQ), Arg-47, Ser-51, and 81–84 (DEQQ). His-106 is an active-site residue. Gly-132 lines the NADP(+) pocket. The KARI C-terminal knotted domain maps to 181-326 (TFQEETETDL…AELREMMSWI (146 aa)). Residues Asp-189, Glu-193, Glu-225, and Glu-229 each contribute to the Mg(2+) site. Ser-250 contributes to the substrate binding site.

It belongs to the ketol-acid reductoisomerase family. Mg(2+) serves as cofactor.

It carries out the reaction (2R)-2,3-dihydroxy-3-methylbutanoate + NADP(+) = (2S)-2-acetolactate + NADPH + H(+). The enzyme catalyses (2R,3R)-2,3-dihydroxy-3-methylpentanoate + NADP(+) = (S)-2-ethyl-2-hydroxy-3-oxobutanoate + NADPH + H(+). It participates in amino-acid biosynthesis; L-isoleucine biosynthesis; L-isoleucine from 2-oxobutanoate: step 2/4. It functions in the pathway amino-acid biosynthesis; L-valine biosynthesis; L-valine from pyruvate: step 2/4. Involved in the biosynthesis of branched-chain amino acids (BCAA). Catalyzes an alkyl-migration followed by a ketol-acid reduction of (S)-2-acetolactate (S2AL) to yield (R)-2,3-dihydroxy-isovalerate. In the isomerase reaction, S2AL is rearranged via a Mg-dependent methyl migration to produce 3-hydroxy-3-methyl-2-ketobutyrate (HMKB). In the reductase reaction, this 2-ketoacid undergoes a metal-dependent reduction by NADPH to yield (R)-2,3-dihydroxy-isovalerate. The sequence is that of Ketol-acid reductoisomerase (NADP(+)) 2 from Bacillus cereus (strain ATCC 10987 / NRS 248).